An 858-amino-acid chain; its full sequence is Alanine--tRNA ligase (858 aa).

Zn(2+) is bound by residues histidine 550, histidine 554, cysteine 652, and histidine 656.

The protein belongs to the class-II aminoacyl-tRNA synthetase family. Requires Zn(2+) as cofactor.

The protein localises to the cytoplasm. It carries out the reaction tRNA(Ala) + L-alanine + ATP = L-alanyl-tRNA(Ala) + AMP + diphosphate. Catalyzes the attachment of alanine to tRNA(Ala) in a two-step reaction: alanine is first activated by ATP to form Ala-AMP and then transferred to the acceptor end of tRNA(Ala). Also edits incorrectly charged Ser-tRNA(Ala) and Gly-tRNA(Ala) via its editing domain. The chain is Alanine--tRNA ligase from Pseudothermotoga lettingae (strain ATCC BAA-301 / DSM 14385 / NBRC 107922 / TMO) (Thermotoga lettingae).